A 435-amino-acid polypeptide reads, in one-letter code: Zinc finger and BTB domain-containing protein 25 (435 aa).

In terms of domain architecture, BTB spans 1–107 (MDTASHSLVL…GIRFLHADYL (107 aa)). Glycyl lysine isopeptide (Lys-Gly) (interchain with G-Cter in SUMO2) cross-links involve residues lysine 142, lysine 148, lysine 198, and lysine 204. The segment at 238–260 (HLCHYCGERFDSRSNLRQHLHTH) adopts a C2H2-type 1 zinc-finger fold. Glycyl lysine isopeptide (Lys-Gly) (interchain with G-Cter in SUMO2) cross-links involve residues lysine 303 and lysine 330. A C2H2-type 2 zinc finger spans residues 349–371 (MSCTICGHKFPRKSQLLEHMYTH). Residue lysine 405 forms a Glycyl lysine isopeptide (Lys-Gly) (interchain with G-Cter in SUMO2) linkage.

Expressed mainly in hematopoietic cells and testis.

The protein resides in the nucleus. Its function is as follows. May be involved in transcriptional regulation. In Homo sapiens (Human), this protein is Zinc finger and BTB domain-containing protein 25 (ZBTB25).